Consider the following 148-residue polypeptide: MADTMQFDLVSPERNLVSVPVREVRLPGADGDLTAMPGHAPAIVNLRPGLVTVVAGDGSETEFAVTGGFAEINNESVTLLAERGHPRAEMTQEVFNEMMAQARRRVEAAKERESAGEELVAAAVKLLADMEALGTHIGLDPNHANFPH.

This sequence belongs to the ATPase epsilon chain family. In terms of assembly, F-type ATPases have 2 components, CF(1) - the catalytic core - and CF(0) - the membrane proton channel. CF(1) has five subunits: alpha(3), beta(3), gamma(1), delta(1), epsilon(1). CF(0) has three main subunits: a, b and c.

The protein localises to the cell inner membrane. Functionally, produces ATP from ADP in the presence of a proton gradient across the membrane. The chain is ATP synthase epsilon chain from Paracoccus denitrificans (strain Pd 1222).